The chain runs to 354 residues: G protein alpha o subunit (354 aa).

A lipid anchor (N-myristoyl glycine) is attached at Gly2. Cys3 is lipidated: S-palmitoyl cysteine. In terms of domain architecture, G-alpha spans 32–354 (KDIKLLLLGA…ANNLRGCGLY (323 aa)). The tract at residues 35–48 (KLLLLGAGESGKST) is G1 motif. GTP-binding positions include 40–47 (GAGESGKS), 176–182 (LRTRVKT), 201–205 (DVGGQ), 270–273 (NKKD), and Ala326. 2 residues coordinate Mg(2+): Ser47 and Thr182. The G2 motif stretch occupies residues 174–182 (DILRTRVKT). The interval 197–206 (FKLFDVGGQR) is G3 motif. Residues 266–273 (ILFLNKKD) are G4 motif. The G5 motif stretch occupies residues 324-329 (TCATDT).

It belongs to the G-alpha family. G(i/o/t/z) subfamily. G proteins are composed of 3 units; alpha, beta and gamma. The alpha chain contains the guanine nucleotide binding site. Expressed primarily in neuronal cell bodies in the brain, optic lobe, and thoracic and abdominal ganglia. Also expressed in antenna, oocytes and ovarian nurse cells.

In terms of biological role, guanine nucleotide-binding proteins (G proteins) are involved as modulators or transducers in various transmembrane signaling systems. Plays a role in glial cell differentiation during embryogenesis; loco, Galphai and the G-protein coupled receptor, moody, are required in the surface glia to achieve effective insulation of the nerve cord. The polypeptide is G protein alpha o subunit (Galphao) (Drosophila melanogaster (Fruit fly)).